The chain runs to 2193 residues: Genome polyprotein (2193 aa).

Glycine 2 is lipidated: N-myristoyl glycine; by host. At 2-1503 (GAQVSTQKTG…HVSRAFICLQ (1502 aa)) the chain is on the cytoplasmic side. Positions 565–582 (QLLQGDVEEAVNRAVARV) are amphipathic alpha-helix. Residues histidine 880 and aspartate 898 each act as for protease 2A activity in the active site. Zn(2+)-binding residues include cysteine 915 and cysteine 917. Residue cysteine 969 is the For protease 2A activity of the active site. Zn(2+) is bound by residues cysteine 975 and histidine 977. The interval 1109–1181 (SNGWLKKFTE…EQSAPSQSDQ (73 aa)) is membrane-binding. The segment at 1109-1247 (SNGWLKKFTE…SPGAGKSVAT (139 aa)) is oligomerization. Residues 1130–1134 (AIKIQ) form an RNA-binding region. The SF3 helicase domain occupies 1213–1369 (EKKMSNYIQF…SMYSQNGKIN (157 aa)). Positions 1377, 1389, and 1394 each coordinate Zn(2+). A C4-type; degenerate zinc finger spans residues 1377-1394 (CDEECCPVNFKRCCPLVC). Residues 1421–1428 (EYNHRHSV) form an RNA-binding region. The oligomerization stretch occupies residues 1432 to 1437 (LEALFQ). An intramembrane segment occupies 1504–1519 (ALTTFVSVAGIIYIIY). Residues 1520-2193 (KLFAGFQGAY…TLRRKWLDSF (674 aa)) are Cytoplasmic-facing. Position 1529 is an O-(5'-phospho-RNA)-tyrosine (tyrosine 1529). Residues 1549 to 1727 (GPAFEFAVAM…FSAALLRHYF (179 aa)) enclose the Peptidase C3 domain. Active-site for protease 3C activity residues include histidine 1588, glutamate 1619, and cysteine 1695. Residues 1958 to 2074 (GHLIAFDYSG…SYPWPIDASL (117 aa)) enclose the RdRp catalytic domain. 2 residues coordinate Mg(2+): aspartate 1964 and aspartate 2060.

This sequence belongs to the picornaviruses polyprotein family. Interacts with capsid protein VP1 and capsid protein VP3 to form heterotrimeric protomers. In terms of assembly, interacts with capsid protein VP0, and capsid protein VP3 to form heterotrimeric protomers. Five protomers subsequently associate to form pentamers which serve as building blocks for the capsid. Interacts with capsid protein VP2, capsid protein VP3 and capsid protein VP4 following cleavage of capsid protein VP0. As to quaternary structure, interacts with capsid protein VP1 and capsid protein VP3 in the mature capsid. Interacts with host CD55; this interaction promotes virus attachment to the host cell and subsequent internalization. Interacts with capsid protein VP0 and capsid protein VP1 to form heterotrimeric protomers. Five protomers subsequently associate to form pentamers which serve as building blocks for the capsid. Interacts with capsid protein VP4 in the mature capsid. Interacts with protein 2C; this interaction may be important for virion morphogenesis. Interacts with host CD55; this interaction promotes virus attachment to the host cell and subsequent internalization. In terms of assembly, interacts with capsid protein VP1 and capsid protein VP3. As to quaternary structure, homodimer. Homohexamer; forms a hexameric ring structure with 6-fold symmetry characteristic of AAA+ ATPases. Interacts (via N-terminus) with host RTN3 (via reticulon domain); this interaction is important for viral replication. Interacts with capsid protein VP3; this interaction may be important for virion morphogenesis. In terms of assembly, interacts with protein 3CD. As to quaternary structure, homodimer. Interacts with host GBF1. Interacts (via GOLD domain) with host ACBD3 (via GOLD domain); this interaction allows the formation of a viral protein 3A/ACBD3 heterotetramer with a 2:2 stoichiometry, which will stimulate the recruitment of host PI4KB in order to synthesize PI4P at the viral RNA replication sites. Interacts with RNA-directed RNA polymerase. In terms of assembly, interacts with protein 3AB and with RNA-directed RNA polymerase. As to quaternary structure, interacts with Viral protein genome-linked and with protein 3CD. Mg(2+) serves as cofactor. Specific enzymatic cleavages in vivo by the viral proteases yield processing intermediates and the mature proteins. Post-translationally, myristoylation is required for the formation of pentamers during virus assembly. Further assembly of 12 pentamers and a molecule of genomic RNA generates the provirion. In terms of processing, during virion maturation, immature virions are rendered infectious following cleavage of VP0 into VP4 and VP2. This maturation seems to be an autocatalytic event triggered by the presence of RNA in the capsid and it is followed by a conformational change infectious virion. Myristoylation is required during RNA encapsidation and formation of the mature virus particle. Post-translationally, VPg is uridylylated by the polymerase into VPg-pUpU. This acts as a nucleotide-peptide primer for the genomic RNA replication.

The protein resides in the virion. It is found in the host cytoplasm. It localises to the host cytoplasmic vesicle membrane. The protein localises to the host nucleus. It carries out the reaction a ribonucleoside 5'-triphosphate + H2O = a ribonucleoside 5'-diphosphate + phosphate + H(+). The catalysed reaction is Selective cleavage of Tyr-|-Gly bond in the picornavirus polyprotein.. The enzyme catalyses RNA(n) + a ribonucleoside 5'-triphosphate = RNA(n+1) + diphosphate. It catalyses the reaction Selective cleavage of Gln-|-Gly bond in the poliovirus polyprotein. In other picornavirus reactions Glu may be substituted for Gln, and Ser or Thr for Gly.. Replication or transcription is subject to high level of random mutations by the nucleotide analog ribavirin. Its function is as follows. Forms an icosahedral capsid of pseudo T=3 symmetry with capsid proteins VP2 and VP3. The capsid is 300 Angstroms in diameter, composed of 60 copies of each capsid protein and enclosing the viral positive strand RNA genome. Capsid protein VP1 mainly forms the vertices of the capsid. Capsid protein VP1 interacts with host cell receptor to provide virion attachment to target host cells. This attachment induces virion internalization. Tyrosine kinases are probably involved in the entry process. After binding to its receptor, the capsid undergoes conformational changes. Capsid protein VP1 N-terminus (that contains an amphipathic alpha-helix) and capsid protein VP4 are externalized. Together, they shape a pore in the host membrane through which viral genome is translocated to host cell cytoplasm. In terms of biological role, forms an icosahedral capsid of pseudo T=3 symmetry with capsid proteins VP2 and VP3. The capsid is 300 Angstroms in diameter, composed of 60 copies of each capsid protein and enclosing the viral positive strand RNA genome. Lies on the inner surface of the capsid shell. After binding to the host receptor, the capsid undergoes conformational changes. Capsid protein VP4 is released, Capsid protein VP1 N-terminus is externalized, and together, they shape a pore in the host membrane through which the viral genome is translocated into the host cell cytoplasm. Functionally, component of immature procapsids, which is cleaved into capsid proteins VP4 and VP2 after maturation. Allows the capsid to remain inactive before the maturation step. Its function is as follows. Cysteine protease that cleaves viral polyprotein and specific host proteins. It is responsible for the autocatalytic cleavage between the P1 and P2 regions, which is the first cleavage occurring in the polyprotein. Also cleaves the host translation initiation factor EIF4G1, in order to shut down the capped cellular mRNA translation. Inhibits the host nucleus-cytoplasm protein and RNA trafficking by cleaving host members of the nuclear pores. Counteracts stress granule formation probably by antagonizing its assembly or promoting its dissassembly. In terms of biological role, plays an essential role in the virus replication cycle by acting as a viroporin. Creates a pore in the host endoplasmic reticulum and as a consequence releases Ca2+ in the cytoplasm of infected cell. In turn, high levels of cytoplasmic calcium may trigger membrane trafficking and transport of viral ER-associated proteins to viroplasms, sites of viral genome replication. Induces and associates with structural rearrangements of intracellular membranes. Displays RNA-binding, nucleotide binding and NTPase activities. May play a role in virion morphogenesis and viral RNA encapsidation by interacting with the capsid protein VP3. Functionally, localizes the viral replication complex to the surface of membranous vesicles. Together with protein 3CD binds the Cis-Active RNA Element (CRE) which is involved in RNA synthesis initiation. Acts as a cofactor to stimulate the activity of 3D polymerase, maybe through a nucleid acid chaperone activity. Its function is as follows. Localizes the viral replication complex to the surface of membranous vesicles. It inhibits host cell endoplasmic reticulum-to-Golgi apparatus transport and causes the disassembly of the Golgi complex, possibly through GBF1 interaction. This would result in depletion of MHC, trail receptors and IFN receptors at the host cell surface. Plays an essential role in viral RNA replication by recruiting ACBD3 and PI4KB at the viral replication sites, thereby allowing the formation of the rearranged membranous structures where viral replication takes place. In terms of biological role, acts as a primer for viral RNA replication and remains covalently bound to viral genomic RNA. VPg is uridylylated prior to priming replication into VPg-pUpU. The oriI viral genomic sequence may act as a template for this. The VPg-pUpU is then used as primer on the genomic RNA poly(A) by the RNA-dependent RNA polymerase to replicate the viral genome. During genome replication, the VPg-RNA linkage is removed by the host TDP2, thereby accelerating replication. During the late stage of the replication cycle, host TDP2 is excluded from sites of viral RNA synthesis and encapsidation, allowing for the generation of progeny virions. Involved in the viral replication complex and viral polypeptide maturation. It exhibits protease activity with a specificity and catalytic efficiency that is different from protease 3C. Protein 3CD lacks polymerase activity. Protein 3CD binds to the 5'UTR of the viral genome. Functionally, replicates the viral genomic RNA on the surface of intracellular membranes. May form linear arrays of subunits that propagate along a strong head-to-tail interaction called interface-I. Covalently attaches UMP to a tyrosine of VPg, which is used to prime RNA synthesis. The positive stranded RNA genome is first replicated at virus induced membranous vesicles, creating a dsRNA genomic replication form. This dsRNA is then used as template to synthesize positive stranded RNA genomes. ss(+)RNA genomes are either translated, replicated or encapsidated. Its function is as follows. Major viral protease that mediates proteolytic processing of the polyprotein. Cleaves host EIF5B, contributing to host translation shutoff. Also cleaves host PABPC1, contributing to host translation shutoff. Cleaves host NLRP1, triggers host N-glycine-mediated degradation of the autoinhibitory NLRP1 N-terminal fragment. The chain is Genome polyprotein from Echovirus 12 (strain Travis).